The sequence spans 492 residues: Probable cytochrome P450 313a3 (492 aa).

Cys-438 contacts heme.

The protein belongs to the cytochrome P450 family. The cofactor is heme.

The protein resides in the endoplasmic reticulum membrane. Its subcellular location is the microsome membrane. Functionally, may be involved in the metabolism of insect hormones and in the breakdown of synthetic insecticides. This chain is Probable cytochrome P450 313a3 (Cyp313a3), found in Drosophila melanogaster (Fruit fly).